The following is a 604-amino-acid chain: MNKTKGFTKYKKMRYIPGLDGLRAIAVLGIIIYHLNKQWLTGGFLGVDTFFVISGYLITSLLLKEYDDTGIIKLKSFWIRRLKRLLPAVIVLLMVVGTATLLLKSDNIIRVKHDIIAAIFYVSNWWYIAKDVNYFEQFSFMPLKHLWSLAIEEQFYIFFPVILVTLLLTIKKRYKIGFIFWGVSIISLGLMMFIYSINGDHSRVYFGTDTRLQTLLLGVILAFLWPPFKLKNDPPKVVKYVIDSIGSLSFIVLILLFFIINDETNWIYDGGFYLISILTLFIIASVVHPSTWIAKIFSNPVLVFIGKRSYSLYLWHFAVISFVHSYYVDGQIPVYVYFIDISLTIIFAELSYRFIETPFRKEGIKALNWRPSYIPQFIRMAIVVTLLIPFMLILVGAFNKYGKDIIGEKANSFDTTIEDNYLMRIAPIDNIHIDGLVSEKKKESSDVYNNIKPLLIGDSVMVDIGESFKSSVPKSRIDGKVGRQLYQTLPLVKANYSQYKKSSDQVVLELGTNGDFTVKQLDDLLNQFGKAKIYLVNTRVPRIYEANVNRLLADAAKRKSNVTLIDWYKRSQGHSEYFAPDGVHLEYKGVLALKDEILKALKKK.

The next 11 membrane-spanning stretches (helical) occupy residues 15–35 (YIPGLDGLRAIAVLGIIIYHL), 43–63 (GFLGVDTFFVISGYLITSLLL), 85–105 (LLPAVIVLLMVVGTATLLLKS), 150–170 (AIEEQFYIFFPVILVTLLLTI), 176–196 (IGFIFWGVSIISLGLMMFIYS), 212–232 (LQTLLLGVILAFLWPPFKLKN), 240–260 (YVIDSIGSLSFIVLILLFFII), 267–287 (IYDGGFYLISILTLFIIASVV), 310–330 (YSLYLWHFAVISFVHSYYVDG), 332–352 (IPVYVYFIDISLTIIFAELSY), and 377–397 (FIRMAIVVTLLIPFMLILVGA). Active-site residues include serine 459, aspartate 581, and histidine 584.

This sequence belongs to the acyltransferase 3 family.

Its subcellular location is the cell membrane. The chain is Putative O-acetyltransferase SACOL0978 from Staphylococcus aureus (strain COL).